The chain runs to 654 residues: tRNA 5-methylaminomethyl-2-thiouridine biosynthesis bifunctional protein MnmC (654 aa).

Residues 1–235 (MSDFQHAQLD…KREMLGGTYQ (235 aa)) form a tRNA (mnm(5)s(2)U34)-methyltransferase region. Residues 261 to 654 (VGGGLAGCAS…LRDLVRGQRG (394 aa)) form an FAD-dependent cmnm(5)s(2)U34 oxidoreductase region.

The protein in the N-terminal section; belongs to the methyltransferase superfamily. tRNA (mnm(5)s(2)U34)-methyltransferase family. In the C-terminal section; belongs to the DAO family. FAD is required as a cofactor.

Its subcellular location is the cytoplasm. The enzyme catalyses 5-aminomethyl-2-thiouridine(34) in tRNA + S-adenosyl-L-methionine = 5-methylaminomethyl-2-thiouridine(34) in tRNA + S-adenosyl-L-homocysteine + H(+). Functionally, catalyzes the last two steps in the biosynthesis of 5-methylaminomethyl-2-thiouridine (mnm(5)s(2)U) at the wobble position (U34) in tRNA. Catalyzes the FAD-dependent demodification of cmnm(5)s(2)U34 to nm(5)s(2)U34, followed by the transfer of a methyl group from S-adenosyl-L-methionine to nm(5)s(2)U34, to form mnm(5)s(2)U34. This is tRNA 5-methylaminomethyl-2-thiouridine biosynthesis bifunctional protein MnmC from Pseudomonas paraeruginosa (strain DSM 24068 / PA7) (Pseudomonas aeruginosa (strain PA7)).